Reading from the N-terminus, the 217-residue chain is Ribonuclease HII 2 (217 aa).

An RNase H type-2 domain is found at 28–217; it reads GLLAGVDEAG…VREVLLERRP (190 aa). 3 residues coordinate a divalent metal cation: D34, E35, and D126.

Belongs to the RNase HII family. Requires Mn(2+) as cofactor. Mg(2+) serves as cofactor.

The protein localises to the cytoplasm. It carries out the reaction Endonucleolytic cleavage to 5'-phosphomonoester.. Endonuclease that specifically degrades the RNA of RNA-DNA hybrids. The polypeptide is Ribonuclease HII 2 (Methylibium petroleiphilum (strain ATCC BAA-1232 / LMG 22953 / PM1)).